A 230-amino-acid chain; its full sequence is Movement and silencing protein TGBp1 (230 aa).

The (+)RNA virus helicase ATP-binding domain occupies 1–114 (MDSIINALTS…GLALRPHFIK (114 aa)). The region spanning 115-230 (SVSHRLCPAT…VRSPPPHPSH (116 aa)) is the (+)RNA virus helicase C-terminal domain.

It belongs to the Tymovirales TGBp1 protein family. Homodimer and homooligomer. Interacts with capsid protein. Interacts with host AGO1; this interaction targets the host protein for degradation, thereby suppressing the antiviral RNA silencing.

It localises to the host cytoplasm. Its function is as follows. Transports viral genome to neighboring plant cells directly through plasmosdesmata, without any budding. The movement protein allows efficient cell to cell propagation, by bypassing the host cell wall barrier. Increases plasmodesma size exclusion limit. Acts as a suppressor of RNA-mediated gene silencing, also known as post-transcriptional gene silencing (PTGS), a mechanism of plant viral defense that limits the accumulation of viral RNAs. This is Movement and silencing protein TGBp1 from Plantago asiatica (P1AMV).